The sequence spans 360 residues: Aminomethyltransferase (360 aa).

This sequence belongs to the GcvT family. As to quaternary structure, the glycine cleavage system is composed of four proteins: P, T, L and H.

It carries out the reaction N(6)-[(R)-S(8)-aminomethyldihydrolipoyl]-L-lysyl-[protein] + (6S)-5,6,7,8-tetrahydrofolate = N(6)-[(R)-dihydrolipoyl]-L-lysyl-[protein] + (6R)-5,10-methylene-5,6,7,8-tetrahydrofolate + NH4(+). Its function is as follows. The glycine cleavage system catalyzes the degradation of glycine. This chain is Aminomethyltransferase, found in Legionella pneumophila (strain Lens).